We begin with the raw amino-acid sequence, 104 residues long: MRPDHRMGPPHDEEPHMPETIDAVPEIDDLRREIDELDATIIAAIQRRTEVSKTIGKARMASGGTRLVHSREMKVIERYIDALGPEGKDLAMLLLRLGRGRLGY.

A Chorismate mutase domain is found at 23-104 (AVPEIDDLRR…LRLGRGRLGY (82 aa)). Residues Arg-59, Val-68, and Glu-72 each contribute to the chorismate site.

As to quaternary structure, homodimer. Probably interacts with AroG (MSMEG_4244).

The protein resides in the cytoplasm. It catalyses the reaction chorismate = prephenate. Its pathway is metabolic intermediate biosynthesis; prephenate biosynthesis; prephenate from chorismate: step 1/1. With respect to regulation, the formation of the complex with AroG activates the chorismate mutase activity. In terms of biological role, catalyzes the Claisen rearrangement of chorismate to prephenate. Probably involved in the aromatic amino acid biosynthesis. This Mycolicibacterium smegmatis (strain ATCC 700084 / mc(2)155) (Mycobacterium smegmatis) protein is Intracellular chorismate mutase.